The sequence spans 133 residues: MVKIRLKRTGRKKLPFYQIVAADSRAPRDGKFLEIVGHYQPTAKPHAVTIKKDRVSYWMQTGAQPTDTVRSLIRSTGLLHELRLRSLGRSEADITAEMEKWQQNQTERRQKRLAVKTRRRQAKKAAEAKGAEA.

The interval 99-133 (EKWQQNQTERRQKRLAVKTRRRQAKKAAEAKGAEA) is disordered. Residues 109 to 123 (RQKRLAVKTRRRQAK) are compositionally biased toward basic residues. The segment covering 124–133 (KAAEAKGAEA) has biased composition (basic and acidic residues).

The protein belongs to the bacterial ribosomal protein bS16 family.

The polypeptide is Small ribosomal subunit protein bS16 (Chlorobium limicola (strain DSM 245 / NBRC 103803 / 6330)).